Here is a 167-residue protein sequence, read N- to C-terminus: Urease accessory protein UreE (167 aa).

A disordered region spans residues Ala137–Asp167. Basic and acidic residues predominate over residues His149–Asp167.

Belongs to the UreE family.

The protein resides in the cytoplasm. Functionally, involved in urease metallocenter assembly. Binds nickel. Probably functions as a nickel donor during metallocenter assembly. This Rhizobium rhizogenes (strain K84 / ATCC BAA-868) (Agrobacterium radiobacter) protein is Urease accessory protein UreE.